The following is a 225-amino-acid chain: UPF0758 protein Shew_3481 (225 aa).

Positions 102–224 constitute an MPN domain; the sequence is ILSDPDLTRD…IVSFAERGWI (123 aa). 3 residues coordinate Zn(2+): H173, H175, and D186. The JAMM motif motif lies at 173 to 186; sequence HNHPSGGAEPSHAD.

It belongs to the UPF0758 family.

This chain is UPF0758 protein Shew_3481, found in Shewanella loihica (strain ATCC BAA-1088 / PV-4).